The primary structure comprises 1058 residues: Carbamoyl phosphate synthase large chain (1058 aa).

The interval 1-401 (MPKRKDIKTI…SLLKAIRSLE (401 aa)) is carboxyphosphate synthetic domain. R129, R169, G175, G176, K208, I210, E215, G241, I242, H243, Q284, and E298 together coordinate ATP. The 195-residue stretch at 133–327 (RDLMNELNEP…IAKIAAKIAV (195 aa)) folds into the ATP-grasp 1 domain. Residues Q284, E298, and N300 each coordinate Mg(2+). Mn(2+) is bound by residues Q284, E298, and N300. The segment at 402 to 546 (YGVHHLGLPN…YSTYEFENES (145 aa)) is oligomerization domain. The carbamoyl phosphate synthetic domain stretch occupies residues 547 to 929 (TRSDKEKIVV…ALYKGLTAAG (383 aa)). The ATP-grasp 2 domain occupies 671 to 861 (EKLLIGLKIP…VANIAMQCIL (191 aa)). Residues R707, R746, L748, E752, G777, V778, H779, S780, Q820, and E832 each contribute to the ATP site. Mg(2+) is bound by residues Q820, E832, and N834. The Mn(2+) site is built by Q820, E832, and N834. The 129-residue stretch at 930–1058 (IKIKDYGRVL…ESMSFRVQTL (129 aa)) folds into the MGS-like domain. Residues 930–1058 (IKIKDYGRVL…ESMSFRVQTL (129 aa)) form an allosteric domain region.

The protein belongs to the CarB family. Composed of two chains; the small (or glutamine) chain promotes the hydrolysis of glutamine to ammonia, which is used by the large (or ammonia) chain to synthesize carbamoyl phosphate. Tetramer of heterodimers (alpha,beta)4. Mg(2+) serves as cofactor. It depends on Mn(2+) as a cofactor.

It catalyses the reaction hydrogencarbonate + L-glutamine + 2 ATP + H2O = carbamoyl phosphate + L-glutamate + 2 ADP + phosphate + 2 H(+). The enzyme catalyses hydrogencarbonate + NH4(+) + 2 ATP = carbamoyl phosphate + 2 ADP + phosphate + 2 H(+). Its pathway is amino-acid biosynthesis; L-arginine biosynthesis; carbamoyl phosphate from bicarbonate: step 1/1. The protein operates within pyrimidine metabolism; UMP biosynthesis via de novo pathway; (S)-dihydroorotate from bicarbonate: step 1/3. In terms of biological role, large subunit of the glutamine-dependent carbamoyl phosphate synthetase (CPSase). CPSase catalyzes the formation of carbamoyl phosphate from the ammonia moiety of glutamine, carbonate, and phosphate donated by ATP, constituting the first step of 2 biosynthetic pathways, one leading to arginine and/or urea and the other to pyrimidine nucleotides. The large subunit (synthetase) binds the substrates ammonia (free or transferred from glutamine from the small subunit), hydrogencarbonate and ATP and carries out an ATP-coupled ligase reaction, activating hydrogencarbonate by forming carboxy phosphate which reacts with ammonia to form carbamoyl phosphate. The chain is Carbamoyl phosphate synthase large chain from Fusobacterium nucleatum subsp. nucleatum (strain ATCC 25586 / DSM 15643 / BCRC 10681 / CIP 101130 / JCM 8532 / KCTC 2640 / LMG 13131 / VPI 4355).